A 421-amino-acid polypeptide reads, in one-letter code: Tyrosine--tRNA ligase (421 aa).

Residue Tyr-36 participates in L-tyrosine binding. A 'HIGH' region motif is present at residues 41–50; the sequence is PTADSLHIGH. L-tyrosine is bound by residues Tyr-170 and Gln-174. The 'KMSKS' region motif lies at 231–235; that stretch reads KFGKS. Lys-234 contacts ATP. Residues 353–420 form the S4 RNA-binding domain; it reads TNIVEALIET…KKKYFMVNYQ (68 aa).

It belongs to the class-I aminoacyl-tRNA synthetase family. TyrS type 1 subfamily. As to quaternary structure, homodimer.

The protein localises to the cytoplasm. It carries out the reaction tRNA(Tyr) + L-tyrosine + ATP = L-tyrosyl-tRNA(Tyr) + AMP + diphosphate + H(+). Its function is as follows. Catalyzes the attachment of tyrosine to tRNA(Tyr) in a two-step reaction: tyrosine is first activated by ATP to form Tyr-AMP and then transferred to the acceptor end of tRNA(Tyr). The protein is Tyrosine--tRNA ligase of Staphylococcus epidermidis (strain ATCC 35984 / DSM 28319 / BCRC 17069 / CCUG 31568 / BM 3577 / RP62A).